Reading from the N-terminus, the 61-residue chain is Peroxidase 1 (61 aa).

The disordered stretch occupies residues 1 to 32 (DNTAKEKDSPANLSLRTCAAGDNAEQPLDPSR). N-linked (GlcNAc...) asparagine glycosylation occurs at asparagine 12. Positions 29, 31, and 36 each coordinate Ca(2+).

It belongs to the peroxidase family. Classical plant (class III) peroxidase subfamily. The cofactor is Ca(2+). Heme b serves as cofactor.

Its subcellular location is the secreted. The catalysed reaction is 2 a phenolic donor + H2O2 = 2 a phenolic radical donor + 2 H2O. Functionally, removal of H(2)O(2), oxidation of toxic reductants, biosynthesis and degradation of lignin, suberization, auxin catabolism, response to environmental stresses such as wounding, pathogen attack and oxidative stress. These functions might be dependent on each isozyme/isoform in each plant tissue. This chain is Peroxidase 1, found in Vitis rotundifolia (Muscadine grape).